A 460-amino-acid chain; its full sequence is U-box domain-containing protein 9 (460 aa).

The U-box domain maps to 73 to 147 (SCPEEFRCPL…SKWCKKNGLE (75 aa)). ARM repeat units follow at residues 201-244 (TEFR…NISI), 248-287 (SNKK…TLSA), and 289-328 (DSNK…TLCI).

Binds to SD11, SD16, SD17, SD18, SD113, SD129 and SD25. Phosphorylated by SD1-6 and SD1-7.

The protein localises to the nucleus. It localises to the cell membrane. The catalysed reaction is S-ubiquitinyl-[E2 ubiquitin-conjugating enzyme]-L-cysteine + [acceptor protein]-L-lysine = [E2 ubiquitin-conjugating enzyme]-L-cysteine + N(6)-ubiquitinyl-[acceptor protein]-L-lysine.. It functions in the pathway protein modification; protein ubiquitination. Functionally, functions as an E3 ubiquitin ligase. May be involved in the abscisic acid-mediated signaling pathway, at least during germination. This is U-box domain-containing protein 9 (PUB9) from Arabidopsis thaliana (Mouse-ear cress).